The chain runs to 133 residues: Serine/threonine-protein kinase RsbT (133 aa).

The enzyme catalyses L-seryl-[protein] + ATP = O-phospho-L-seryl-[protein] + ADP + H(+). It catalyses the reaction L-threonyl-[protein] + ATP = O-phospho-L-threonyl-[protein] + ADP + H(+). In terms of biological role, provides the crucial link between the upstream module (communication of environmental stress) and the downstream module (integration of the environmental signals with signals of energy stress) that compose the signal transduction pathway controlling the sigma-B factor. Phosphorylates and inactivates its specific antagonist protein RsbS thanks to its serine kinase activity. Upon phosphorylation of RsbS, RsbT is released to stimulate RsbU, a PP2C phosphatase, thereby initiating the signaling cascade that ultimately activates sigma-B. The activity of the RsbU phosphatase may be stimulated by a long-lived interaction with RsbT and the serine kinase function of RsbT is not required to directly modify RsbU. Also phosphorylates RsbR thanks to its threonine kinase activity, preventing it to phosphorylate RsbT. In Bacillus subtilis (strain 168), this protein is Serine/threonine-protein kinase RsbT (rsbT).